A 404-amino-acid chain; its full sequence is Cysteine desulfurase IscS (404 aa).

Pyridoxal 5'-phosphate is bound by residues 75–76 (AT), asparagine 155, glutamine 183, and 203–205 (SGH). The residue at position 206 (lysine 206) is an N6-(pyridoxal phosphate)lysine. Threonine 243 is a binding site for pyridoxal 5'-phosphate. The active-site Cysteine persulfide intermediate is cysteine 328. Cysteine 328 provides a ligand contact to [2Fe-2S] cluster.

This sequence belongs to the class-V pyridoxal-phosphate-dependent aminotransferase family. NifS/IscS subfamily. Homodimer. Forms a heterotetramer with IscU, interacts with other sulfur acceptors. It depends on pyridoxal 5'-phosphate as a cofactor.

The protein localises to the cytoplasm. It carries out the reaction (sulfur carrier)-H + L-cysteine = (sulfur carrier)-SH + L-alanine. It functions in the pathway cofactor biosynthesis; iron-sulfur cluster biosynthesis. Its function is as follows. Master enzyme that delivers sulfur to a number of partners involved in Fe-S cluster assembly, tRNA modification or cofactor biosynthesis. Catalyzes the removal of elemental sulfur atoms from cysteine to produce alanine. Functions as a sulfur delivery protein for Fe-S cluster synthesis onto IscU, an Fe-S scaffold assembly protein, as well as other S acceptor proteins. In Serratia proteamaculans (strain 568), this protein is Cysteine desulfurase IscS.